The chain runs to 325 residues: Acetyl-coenzyme A carboxylase carboxyl transferase subunit alpha (325 aa).

The CoA carboxyltransferase C-terminal domain occupies 35 to 292 (EIEKLEARLT…DRVLRASLKQ (258 aa)).

This sequence belongs to the AccA family. As to quaternary structure, acetyl-CoA carboxylase is a heterohexamer composed of biotin carboxyl carrier protein (AccB), biotin carboxylase (AccC) and two subunits each of ACCase subunit alpha (AccA) and ACCase subunit beta (AccD).

The protein localises to the cytoplasm. It catalyses the reaction N(6)-carboxybiotinyl-L-lysyl-[protein] + acetyl-CoA = N(6)-biotinyl-L-lysyl-[protein] + malonyl-CoA. It functions in the pathway lipid metabolism; malonyl-CoA biosynthesis; malonyl-CoA from acetyl-CoA: step 1/1. In terms of biological role, component of the acetyl coenzyme A carboxylase (ACC) complex. First, biotin carboxylase catalyzes the carboxylation of biotin on its carrier protein (BCCP) and then the CO(2) group is transferred by the carboxyltransferase to acetyl-CoA to form malonyl-CoA. This is Acetyl-coenzyme A carboxylase carboxyl transferase subunit alpha from Geobacillus thermodenitrificans (strain NG80-2).